The sequence spans 279 residues: Bifunctional protein FolD (279 aa).

NADP(+) is bound by residues 158 to 160 (GRS), Ser-183, and Ile-224.

The protein belongs to the tetrahydrofolate dehydrogenase/cyclohydrolase family. As to quaternary structure, homodimer.

It catalyses the reaction (6R)-5,10-methylene-5,6,7,8-tetrahydrofolate + NADP(+) = (6R)-5,10-methenyltetrahydrofolate + NADPH. It carries out the reaction (6R)-5,10-methenyltetrahydrofolate + H2O = (6R)-10-formyltetrahydrofolate + H(+). It functions in the pathway one-carbon metabolism; tetrahydrofolate interconversion. In terms of biological role, catalyzes the oxidation of 5,10-methylenetetrahydrofolate to 5,10-methenyltetrahydrofolate and then the hydrolysis of 5,10-methenyltetrahydrofolate to 10-formyltetrahydrofolate. This chain is Bifunctional protein FolD, found in Caldicellulosiruptor saccharolyticus (strain ATCC 43494 / DSM 8903 / Tp8T 6331).